Reading from the N-terminus, the 567-residue chain is Thiol:disulfide interchange protein DsbD (567 aa).

An N-terminal signal peptide occupies residues 1–19 (MAQRIFTLILLLCSTSAFA). Cystine bridges form between Cys122–Cys128 and Cys185–Cys307. A run of 8 helical transmembrane segments spans residues 166 to 186 (LPFSALWALLIGIGIAFTPCV), 210 to 230 (LLLAFIYVQGMALTYTALGLV), 246 to 266 (YVLIGLAIVFTLLALSMFGLF), 299 to 319 (IAGLICSPCTTAPLSAILLYI), 326 to 346 (WLGGGTLYLYALGMGLPLMLV), 360 to 380 (WMAHVKTAFGFVILALPVFLL), 387 to 407 (AWGLRLWSLLGVAFFGWAFIT), and 418 to 438 (IVQIILLAAALISVRPLQDWA). Positions 435–567 (QDWAFGSPSA…FSAHLHDRQP (133 aa)) constitute a Thioredoxin domain. The cysteines at positions 482 and 485 are disulfide-linked.

It belongs to the thioredoxin family. DsbD subfamily.

It is found in the cell inner membrane. The catalysed reaction is [protein]-dithiol + NAD(+) = [protein]-disulfide + NADH + H(+). It carries out the reaction [protein]-dithiol + NADP(+) = [protein]-disulfide + NADPH + H(+). In terms of biological role, required to facilitate the formation of correct disulfide bonds in some periplasmic proteins and for the assembly of the periplasmic c-type cytochromes. Acts by transferring electrons from cytoplasmic thioredoxin to the periplasm. This transfer involves a cascade of disulfide bond formation and reduction steps. This is Thiol:disulfide interchange protein DsbD from Salmonella choleraesuis (strain SC-B67).